The sequence spans 330 residues: Holliday junction branch migration complex subunit RuvB (330 aa).

Residues 1–181 (MEDRLVGCRL…FGVINKLELY (181 aa)) are large ATPase domain (RuvB-L). Residues leucine 20, arginine 21, glycine 62, lysine 65, threonine 66, threonine 67, 128-130 (EDY), arginine 171, tyrosine 181, and arginine 218 contribute to the ATP site. Threonine 66 is a Mg(2+) binding site. Residues 182–252 (SVEELGQIVK…IARTGLEALE (71 aa)) form a small ATPAse domain (RuvB-S) region. A head domain (RuvB-H) region spans residues 255 to 330 (EIGLDAVDRN…AYEHFGLKYE (76 aa)). Residues lysine 310 and arginine 315 each contribute to the DNA site.

It belongs to the RuvB family. In terms of assembly, homohexamer. Forms an RuvA(8)-RuvB(12)-Holliday junction (HJ) complex. HJ DNA is sandwiched between 2 RuvA tetramers; dsDNA enters through RuvA and exits via RuvB. An RuvB hexamer assembles on each DNA strand where it exits the tetramer. Each RuvB hexamer is contacted by two RuvA subunits (via domain III) on 2 adjacent RuvB subunits; this complex drives branch migration. In the full resolvosome a probable DNA-RuvA(4)-RuvB(12)-RuvC(2) complex forms which resolves the HJ.

The protein localises to the cytoplasm. It catalyses the reaction ATP + H2O = ADP + phosphate + H(+). The RuvA-RuvB-RuvC complex processes Holliday junction (HJ) DNA during genetic recombination and DNA repair, while the RuvA-RuvB complex plays an important role in the rescue of blocked DNA replication forks via replication fork reversal (RFR). RuvA specifically binds to HJ cruciform DNA, conferring on it an open structure. The RuvB hexamer acts as an ATP-dependent pump, pulling dsDNA into and through the RuvAB complex. RuvB forms 2 homohexamers on either side of HJ DNA bound by 1 or 2 RuvA tetramers; 4 subunits per hexamer contact DNA at a time. Coordinated motions by a converter formed by DNA-disengaged RuvB subunits stimulates ATP hydrolysis and nucleotide exchange. Immobilization of the converter enables RuvB to convert the ATP-contained energy into a lever motion, pulling 2 nucleotides of DNA out of the RuvA tetramer per ATP hydrolyzed, thus driving DNA branch migration. The RuvB motors rotate together with the DNA substrate, which together with the progressing nucleotide cycle form the mechanistic basis for DNA recombination by continuous HJ branch migration. Branch migration allows RuvC to scan DNA until it finds its consensus sequence, where it cleaves and resolves cruciform DNA. The sequence is that of Holliday junction branch migration complex subunit RuvB from Acetivibrio thermocellus (strain ATCC 27405 / DSM 1237 / JCM 9322 / NBRC 103400 / NCIMB 10682 / NRRL B-4536 / VPI 7372) (Clostridium thermocellum).